Here is a 284-residue protein sequence, read N- to C-terminus: Bifunctional protein FolD (284 aa).

Residue 166–168 (GAS) coordinates NADP(+).

It belongs to the tetrahydrofolate dehydrogenase/cyclohydrolase family. In terms of assembly, homodimer.

It catalyses the reaction (6R)-5,10-methylene-5,6,7,8-tetrahydrofolate + NADP(+) = (6R)-5,10-methenyltetrahydrofolate + NADPH. The enzyme catalyses (6R)-5,10-methenyltetrahydrofolate + H2O = (6R)-10-formyltetrahydrofolate + H(+). Its pathway is one-carbon metabolism; tetrahydrofolate interconversion. Its function is as follows. Catalyzes the oxidation of 5,10-methylenetetrahydrofolate to 5,10-methenyltetrahydrofolate and then the hydrolysis of 5,10-methenyltetrahydrofolate to 10-formyltetrahydrofolate. This chain is Bifunctional protein FolD, found in Legionella pneumophila (strain Corby).